A 428-amino-acid chain; its full sequence is L-gulono-1,4-lactone dehydrogenase (428 aa).

An FAD-binding PCMH-type domain is found at 12–179 (QVCAPSAIVR…SQVTLQTVPL (168 aa)).

Belongs to the oxygen-dependent FAD-linked oxidoreductase family. The cofactor is a divalent metal cation.

The catalysed reaction is L-gulono-1,4-lactone + 2 Fe(III)-[cytochrome c] = L-ascorbate + 2 Fe(II)-[cytochrome c] + 3 H(+). It functions in the pathway cofactor biosynthesis; L-ascorbate biosynthesis. In terms of biological role, oxidizes L-gulono-1,4-lactone to L-xylo-hexulonolactone which spontaneously isomerizes to L-ascorbate. This Mycobacterium tuberculosis (strain CDC 1551 / Oshkosh) protein is L-gulono-1,4-lactone dehydrogenase.